The following is a 529-amino-acid chain: MQQRRPVRRALLSVSDKAGIVEFAQALSARGVELLSTGGTARLLAEKGLPVTEVSDYTGFPEMMDGRVKTLHPKVHGGILGRRGLDDAIMEEHQILPIDMVVVNLYPFAQTVAREGCSLEDAVENIDIGGPTMVRSAAKNHKDVAIVVKSSDYDAIIKEMDANEGSLTLATRFDLAIKAFEHTAAYDSMIANYFGSMVPAYHGESKEAAGRFPRTLNLNFIKKQDMRYGENSHQQAAFYIEENVKEASVATATQVQGKALSYNNIADTDAALECVKEFAEPACVIVKHANPCGVAIGHSILDAYDRAYKTDPTSAFGGIIAFNRELDAETAQAIISRQFVEVIIAPSASEEALKITAAKQNVRVLTCGQWGERVPGLDFKRVNGGLLVQDRDLGMVGAEELRVVTKRQPSEQELRDALFCWKVAKFVKSNAIVYAKNNMTIGIGAGQMSRVYSAKIAGIKAADEGLEVKGSSMASDAFFPFRDGIDAAAAAGVTCVIQPGGSIRDDEVIAAADEHGIAMLFTDMRHFRH.

One can recognise an MGS-like domain in the interval 1–148 (MQQRRPVRRA…KNHKDVAIVV (148 aa)). K287 is modified (N6-acetyllysine).

This sequence belongs to the PurH family.

It catalyses the reaction (6R)-10-formyltetrahydrofolate + 5-amino-1-(5-phospho-beta-D-ribosyl)imidazole-4-carboxamide = 5-formamido-1-(5-phospho-D-ribosyl)imidazole-4-carboxamide + (6S)-5,6,7,8-tetrahydrofolate. The enzyme catalyses IMP + H2O = 5-formamido-1-(5-phospho-D-ribosyl)imidazole-4-carboxamide. Its pathway is purine metabolism; IMP biosynthesis via de novo pathway; 5-formamido-1-(5-phospho-D-ribosyl)imidazole-4-carboxamide from 5-amino-1-(5-phospho-D-ribosyl)imidazole-4-carboxamide (10-formyl THF route): step 1/1. The protein operates within purine metabolism; IMP biosynthesis via de novo pathway; IMP from 5-formamido-1-(5-phospho-D-ribosyl)imidazole-4-carboxamide: step 1/1. The protein is Bifunctional purine biosynthesis protein PurH of Escherichia coli O6:H1 (strain CFT073 / ATCC 700928 / UPEC).